The chain runs to 429 residues: MSYLFTSESVSEGHPDKVSDQISDAILDQFLATDPDSKVACETLVTTGQVVLAGEVKSRSYVDVQETARRVIERIGYTKSEYGFDTRSCGIFSSIHEQSADINRGVDRSDRSEQGAGDQGMMFGYATNETENYMPLTVDLAHHLLYELAAIRKEPSSPMPYLRPDAKSQVTIEHDDEGRPVRIDTIVISTQHDEFVQASDGISEAEADRMMQERIHHDIATILIPRVKMLYKPEIAALFDEKVRLFVNPTGKFVIGGPHGDTGLTGRKIIVDTYGGRASHGGGAFSGKDPSKVDRSAAYAARHIAKNMVAAGVADEMLVQVAYAIGVAEPVSIYVNTKGRSHVALSDGQIAEKIKKIFDMRPYAIEQRLKLRNPIYEETAAYGHFGREPYEAYKTFVDEHGTEQMRIVELFTWEKLDYVDKIRAEFGLS.

His-14 is an ATP binding site. Asp-16 lines the Mg(2+) pocket. K(+) is bound at residue Glu-42. Residues Glu-55 and Gln-98 each coordinate L-methionine. The segment at 98-108 (QSADINRGVDR) is flexible loop. ATP contacts are provided by residues 165-167 (DAK), 252-253 (KF), Asp-261, 267-268 (RK), Ala-284, and Lys-288. Position 261 (Asp-261) interacts with L-methionine. Residue Lys-292 coordinates L-methionine.

The protein belongs to the AdoMet synthase family. As to quaternary structure, homotetramer; dimer of dimers. It depends on Mg(2+) as a cofactor. The cofactor is K(+).

It is found in the cytoplasm. It carries out the reaction L-methionine + ATP + H2O = S-adenosyl-L-methionine + phosphate + diphosphate. It functions in the pathway amino-acid biosynthesis; S-adenosyl-L-methionine biosynthesis; S-adenosyl-L-methionine from L-methionine: step 1/1. Functionally, catalyzes the formation of S-adenosylmethionine (AdoMet) from methionine and ATP. The overall synthetic reaction is composed of two sequential steps, AdoMet formation and the subsequent tripolyphosphate hydrolysis which occurs prior to release of AdoMet from the enzyme. The protein is S-adenosylmethionine synthase of Porphyromonas gingivalis (strain ATCC BAA-308 / W83).